Here is a 210-residue protein sequence, read N- to C-terminus: C4-dicarboxylate TRAP transporter small permease protein DctQ (210 aa).

Helical transmembrane passes span 13 to 33, 77 to 97, 113 to 133, and 160 to 180; these read EGLIAFLLAAMTLVTFVYVVL, ALFAWLIFLGIAYGVRTAGHL, VLGVIACLACLGYAGLLCVAS, and IGLIVPVGFALVFIRFAEILV.

It belongs to the TRAP transporter small permease family. In terms of assembly, the complex comprises the extracytoplasmic solute receptor protein DctP, and the two transmembrane proteins DctQ and DctM.

It is found in the cell inner membrane. Functionally, part of the tripartite ATP-independent periplasmic (TRAP) transport system DctPQM involved in C4-dicarboxylates uptake. The chain is C4-dicarboxylate TRAP transporter small permease protein DctQ from Pseudomonas aeruginosa (strain ATCC 15692 / DSM 22644 / CIP 104116 / JCM 14847 / LMG 12228 / 1C / PRS 101 / PAO1).